A 112-amino-acid chain; its full sequence is Transmembrane protein 14C (112 aa).

The next 4 membrane-spanning stretches (helical) occupy residues 7-27 (VVPL…GGII), 32-52 (AGSV…SLGA), 62-82 (VWVF…RFYH), and 86-106 (FMPA…VGVS).

Belongs to the TMEM14 family.

It localises to the mitochondrion membrane. Functionally, required for normal heme biosynthesis. The sequence is that of Transmembrane protein 14C (TMEM14C) from Pongo abelii (Sumatran orangutan).